Here is a 350-residue protein sequence, read N- to C-terminus: Serpentine receptor class beta-12 (350 aa).

Topologically, residues 1-21 (MSEANLTECELAYQLTYHPFY) are extracellular. Asn-5 is a glycosylation site (N-linked (GlcNAc...) asparagine). The helical transmembrane segment at 22-42 (MIAQFWSFFVSLLAMPSLIFF) threads the bilayer. Topologically, residues 43–57 (MVEKVFKLPFHGNLK) are cytoplasmic. The helical transmembrane segment at 58 to 78 (FLLVSYFIGTFLFASIICFTF) threads the bilayer. Over 79-103 (GYHFFVPFFVTSNCDLIINATLFKY) the chain is Extracellular. Asn-97 carries an N-linked (GlcNAc...) asparagine glycan. Residues 104–124 (GHMIALIFMTIPMILPTAFTV) traverse the membrane as a helical segment. Over 125 to 141 (ERFVALKMAHSYEHVRT) the chain is Cytoplasmic. A helical transmembrane segment spans residues 142–162 (LLGPVLVLVVIAIDSMFLYDI). Over 163 to 189 (YGQEKFDKPFINFILVPATSALQFNSF) the chain is Extracellular. Residues 190–210 (LWYMLYLKITNFICNLILLFI) traverse the membrane as a helical segment. Topologically, residues 211 to 243 (HKILHQSSRYRRKNVSLSVKYEMQEISQSSRFT) are cytoplasmic. The chain crosses the membrane as a helical span at residues 244–264 (LIVTFTHLLFFGWYVSTILLI). The Extracellular portion of the chain corresponds to 265 to 282 (RTVGPDFFRGFINYTVMR). N-linked (GlcNAc...) asparagine glycosylation occurs at Asn-277. Residues 283–303 (GVYCATPTYNLVIVFIGFKAL) traverse the membrane as a helical segment. Residues 304–350 (NHLNFKRNNKVQSTIQIKSTGQEGAENYDNAISNYWDSVYTMNKSKL) lie on the Cytoplasmic side of the membrane.

The protein belongs to the nematode receptor-like protein srb family. Expressed throughout the head.

It localises to the cell membrane. Its subcellular location is the perikaryon. The protein resides in the cell projection. It is found in the dendrite. G-protein coupled receptor. Plays a role in the navigational capacity of sperm and promotes the targeting of sperm derived from males to the fertilization site in the uterus of hermaphrodites. This is Serpentine receptor class beta-12 from Caenorhabditis elegans.